We begin with the raw amino-acid sequence, 715 residues long: Polyribonucleotide nucleotidyltransferase (715 aa).

Residues Asp498 and Asp504 each coordinate Mg(2+). A KH domain is found at 565 to 625; sequence PKVCMMQIKP…ETVKKTVAFI (61 aa). One can recognise an S1 motif domain in the interval 635–709; it reads GTCYQASILR…RIDFLLLPKK (75 aa).

This sequence belongs to the polyribonucleotide nucleotidyltransferase family. Mg(2+) is required as a cofactor.

It localises to the cytoplasm. It carries out the reaction RNA(n+1) + phosphate = RNA(n) + a ribonucleoside 5'-diphosphate. Functionally, involved in mRNA degradation. Catalyzes the phosphorolysis of single-stranded polyribonucleotides processively in the 3'- to 5'-direction. The polypeptide is Polyribonucleotide nucleotidyltransferase (Aster yellows witches'-broom phytoplasma (strain AYWB)).